A 255-amino-acid polypeptide reads, in one-letter code: ATP synthase subunit a 2 (255 aa).

The next 5 helical transmembrane spans lie at 24–44, 86–106, 131–151, 205–225, and 226–246; these read WFGI…VFIL, LIGP…AVDL, DINI…GYTF, MIFI…SVPW, and ALFH…LTVV.

It belongs to the ATPase A chain family. F-type ATPases have 2 components, CF(1) - the catalytic core - and CF(0) - the membrane proton channel. CF(1) has five subunits: alpha(3), beta(3), gamma(1), delta(1), epsilon(1). CF(0) has three main subunits: a(1), b(2) and c(9-12). The alpha and beta chains form an alternating ring which encloses part of the gamma chain. CF(1) is attached to CF(0) by a central stalk formed by the gamma and epsilon chains, while a peripheral stalk is formed by the delta and b chains.

The protein localises to the cell inner membrane. Its function is as follows. Key component of the proton channel; it plays a direct role in the translocation of protons across the membrane. This Vibrio campbellii (strain ATCC BAA-1116) protein is ATP synthase subunit a 2.